An 83-amino-acid polypeptide reads, in one-letter code: Kunitz-type serine protease inhibitor textilinin-3 (83 aa).

The first 24 residues, 1–24 (MSSGGLLLLLGLLTLWEVLTPVSS), serve as a signal peptide directing secretion. Positions 31–81 (CKLPAETGRCNAKIPRFYYNPRQHQCIEFLYGGCGGNANNFKTIKECESTC) constitute a BPTI/Kunitz inhibitor domain. 3 disulfide bridges follow: C31/C81, C40/C64, and C56/C77.

The protein belongs to the venom Kunitz-type family. As to expression, expressed by the venom gland.

It localises to the secreted. In terms of biological role, serine protease inhibitor. Does not inhibit plasmin, and does not reduce blood loss in the mouse tail vein blood loss model. This is Kunitz-type serine protease inhibitor textilinin-3 from Pseudonaja textilis textilis (Eastern brown snake).